We begin with the raw amino-acid sequence, 849 residues long: Neprilysin-1 (849 aa).

At 1-113 (MSQQHEATAA…LKESQQRRRL (113 aa)) the chain is on the cytoplasmic side. A compositionally biased stretch (low complexity) spans 41 to 61 (QQQVQHQAPHQMQQQQQQQQQ). Residues 41–63 (QQQVQHQAPHQMQQQQQQQQQNK) are disordered. A helical; Signal-anchor for type II membrane protein membrane pass occupies residues 114-134 (LVLAIAFTVLGAAIGALAIYF). Over 135–849 (ASVHQRCHLY…MNPAEKCSVW (715 aa)) the chain is Extracellular. A compositionally biased stretch (basic and acidic residues) spans 146–155 (LEPDNDDRPN). A disordered region spans residues 146–167 (LEPDNDDRPNGRWNQDSGSAHE). Residues 172–849 (ICMTQECVRT…MNPAEKCSVW (678 aa)) form the Peptidase M13 domain. Intrachain disulfides connect Cys173–Cys178, Cys196–Cys834, Cys204–Cys794, Cys260–Cys512, and Cys721–Cys846. 5 N-linked (GlcNAc...) asparagine glycosylation sites follow: Asn309, Asn326, Asn393, Asn589, and Asn599. A Zn(2+)-binding site is contributed by His684. Glu685 is an active-site residue. His688 contacts Zn(2+). An N-linked (GlcNAc...) asparagine glycan is attached at Asn709. Position 746 (Glu746) interacts with Zn(2+). Asp750 acts as the Proton donor in catalysis. An N-linked (GlcNAc...) asparagine glycan is attached at Asn778.

This sequence belongs to the peptidase M13 family. Zn(2+) serves as cofactor. As to expression, expressed in the testicular tube, near and in the seminal vesicles. In adults and third-instar larvae, expressed in the midgut and in the mushroom bodies of the brain and neurons in the pars intercerebralis. Also expressed in neurons of the ventral ganglion and imaginal disks (wing and leg) of third-instar larvae. In stage 17 embryos, expressed in the peripheral nervous system, pharynx and midgut.

It localises to the cell membrane. It carries out the reaction Preferential cleavage of polypeptides between hydrophobic residues, particularly with Phe or Tyr at P1'.. Its function is as follows. Metalloendoprotease which functions in fertility and memory formation. Required in the dorsal paired medial neurons and alpha/beta mushroom body neurons for the proper formation of long-term and middle-term memories. Required in males to maximise egg-laying in female mates and is also required in females for their fertility. This is Neprilysin-1 from Drosophila melanogaster (Fruit fly).